The following is an 87-amino-acid chain: Small ribosomal subunit protein bS20 (87 aa).

Belongs to the bacterial ribosomal protein bS20 family.

Functionally, binds directly to 16S ribosomal RNA. This Lachnoclostridium phytofermentans (strain ATCC 700394 / DSM 18823 / ISDg) (Clostridium phytofermentans) protein is Small ribosomal subunit protein bS20.